Here is a 297-residue protein sequence, read N- to C-terminus: Cell division protein FtsX (297 aa).

The Cytoplasmic segment spans residues 1-24 (MKAKTLSRHLREGVKNLSRNGWMT). A helical membrane pass occupies residues 25–45 (FASVSAVTVTLLLVGVFLTAI). The Extracellular segment spans residues 46–171 (MNMNHFATKV…LFDTVKTGRN (126 aa)). A helical transmembrane segment spans residues 172–192 (IGIVLIAGLLFTAMFLISNTI). The Cytoplasmic segment spans residues 193–219 (KITIYARSTEIEIMKLVGATNWFIRWP). Residues 220–240 (FLLEGLFLGVLGSIIPIGLIL) form a helical membrane-spanning segment. Residues 241-270 (VTYNSLQGMFNEKLGGTIFELLPYSPFVFQ) lie on the Extracellular side of the membrane. Residues 271–291 (LAGLLVLIGALIGMWGSVMSI) traverse the membrane as a helical segment. Topologically, residues 292–297 (RRFLKV) are cytoplasmic.

Belongs to the ABC-4 integral membrane protein family. FtsX subfamily. Interacts with FtsE.

The protein resides in the cell membrane. Its function is as follows. Part of the ABC transporter FtsEX involved in asymmetric cellular division facilitating the initiation of sporulation. This chain is Cell division protein FtsX, found in Bacillus anthracis.